A 1024-amino-acid polypeptide reads, in one-letter code: Beta-galactosidase (1024 aa).

The substrate site is built by asparagine 103 and aspartate 202. Aspartate 202 contacts Na(+). The Mg(2+) site is built by glutamate 417, histidine 419, and glutamate 462. Residues glutamate 462 and 538–541 (EYAH) each bind substrate. Glutamate 462 acts as the Proton donor in catalysis. Glutamate 538 serves as the catalytic Nucleophile. Asparagine 598 lines the Mg(2+) pocket. Positions 602 and 605 each coordinate Na(+). Positions 605 and 1000 each coordinate substrate.

Belongs to the glycosyl hydrolase 2 family. Homotetramer. Requires Mg(2+) as cofactor. Na(+) is required as a cofactor.

The catalysed reaction is Hydrolysis of terminal non-reducing beta-D-galactose residues in beta-D-galactosides.. The chain is Beta-galactosidase from Shigella dysenteriae serotype 1 (strain Sd197).